The sequence spans 568 residues: Methyl-accepting chemotaxis protein CtpH (568 aa).

Residues 1–39 (MPASPGHRDVLGCLVAACVPVQPGNPSRRSMLQQSLRAQ) are Cytoplasmic-facing. The helical transmembrane segment at 40–60 (ILVLLGGSLAALLLIALACFG) threads the bilayer. Topologically, residues 61–216 (SLTGDVRAYR…ISAEARRTML (156 aa)) are periplasmic. Residues 217–237 (LGSLVLIGASLAVALLSLWLV) traverse the membrane as a helical segment. Topologically, residues 238–568 (NRNLVRPVQR…LGDALQRLRA (331 aa)) are cytoplasmic. An HAMP domain is found at 239–291 (RNLVRPVQRLIEHIAQLSHGDFGERIEIRRKDELGKLALAANTLRDFLVDIFD). The Methyl-accepting transducer domain occupies 296–532 (STRDLDSASG…EISRNLTEIA (237 aa)).

This sequence belongs to the methyl-accepting chemotaxis (MCP) protein family.

It localises to the cell inner membrane. In terms of biological role, chemotactic-signal transducers respond to changes in the concentration of attractants and repellents in the environment, transduce a signal from the outside to the inside of the cell, and facilitate sensory adaptation through the variation of the level of methylation. Chemoreceptor for inorganic phosphate, which is required for taxis at high concentrations of phosphate. Recognizes inorganic phosphate directly. Can also bind to other components that have a pyrophosphate group, including ATP and ADP. This is Methyl-accepting chemotaxis protein CtpH from Pseudomonas aeruginosa (strain ATCC 15692 / DSM 22644 / CIP 104116 / JCM 14847 / LMG 12228 / 1C / PRS 101 / PAO1).